The following is a 211-amino-acid chain: Large ribosomal subunit protein eL13 (211 aa).

The protein belongs to the eukaryotic ribosomal protein eL13 family. In terms of assembly, component of the 60S large ribosomal subunit (LSU).

The protein localises to the cytoplasm. Component of the ribosome, a large ribonucleoprotein complex responsible for the synthesis of proteins in the cell. The small ribosomal subunit (SSU) binds messenger RNAs (mRNAs) and translates the encoded message by selecting cognate aminoacyl-transfer RNA (tRNA) molecules. The large subunit (LSU) contains the ribosomal catalytic site termed the peptidyl transferase center (PTC), which catalyzes the formation of peptide bonds, thereby polymerizing the amino acids delivered by tRNAs into a polypeptide chain. The nascent polypeptides leave the ribosome through a tunnel in the LSU and interact with protein factors that function in enzymatic processing, targeting, and the membrane insertion of nascent chains at the exit of the ribosomal tunnel. As part of the LSU, it is probably required for its formation and the maturation of rRNAs. The polypeptide is Large ribosomal subunit protein eL13 (rpl13) (Danio rerio (Zebrafish)).